The sequence spans 349 residues: Protein-glutamate methylesterase/protein-glutamine glutaminase 1 (349 aa).

The 118-residue stretch at 2–119 folds into the Response regulatory domain; the sequence is RTLIVDDSAF…DVNKAEKELV (118 aa). D53 is modified (4-aspartylphosphate). Residues 158–345 enclose the CheB-type methylesterase domain; the sequence is ILIGSSTGGP…EEIVKRLEAK (188 aa). Active-site residues include S163, H190, and D287.

It belongs to the CheB family. Phosphorylated by CheA. Phosphorylation of the N-terminal regulatory domain activates the methylesterase activity.

The protein resides in the cytoplasm. It carries out the reaction [protein]-L-glutamate 5-O-methyl ester + H2O = L-glutamyl-[protein] + methanol + H(+). It catalyses the reaction L-glutaminyl-[protein] + H2O = L-glutamyl-[protein] + NH4(+). Its function is as follows. Involved in chemotaxis. Part of a chemotaxis signal transduction system that modulates chemotaxis in response to various stimuli. Catalyzes the demethylation of specific methylglutamate residues introduced into the chemoreceptors (methyl-accepting chemotaxis proteins or MCP) by CheR. Also mediates the irreversible deamidation of specific glutamine residues to glutamic acid. In Methanosarcina acetivorans (strain ATCC 35395 / DSM 2834 / JCM 12185 / C2A), this protein is Protein-glutamate methylesterase/protein-glutamine glutaminase 1.